We begin with the raw amino-acid sequence, 308 residues long: uncharacterized protein (308 aa).

Residues 212–242 (EADKMTIDYMRELDNLQRQYDGLVDEDKALH) adopt a coiled-coil conformation.

This is an uncharacterized protein from Ostreid herpesvirus 1 (isolate France) (OsHV-1).